Consider the following 352-residue polypeptide: Histidine biosynthesis bifunctional protein HisB (352 aa).

The tract at residues 1-164 (MSQKILFIDR…EIENEILSSF (164 aa)) is histidinol-phosphatase. The active-site Nucleophile is the D9. Mg(2+)-binding residues include D9 and D11. The active-site Proton donor is the D11. C93, H95, C101, and C103 together coordinate Zn(2+). D130 is a binding site for Mg(2+). An imidazoleglycerol-phosphate dehydratase region spans residues 165–352 (RSASYQRTTK…ENLASSKGVI (188 aa)).

This sequence in the N-terminal section; belongs to the histidinol-phosphatase family. It in the C-terminal section; belongs to the imidazoleglycerol-phosphate dehydratase family. The cofactor is Mg(2+). Zn(2+) is required as a cofactor.

Its subcellular location is the cytoplasm. It carries out the reaction D-erythro-1-(imidazol-4-yl)glycerol 3-phosphate = 3-(imidazol-4-yl)-2-oxopropyl phosphate + H2O. It catalyses the reaction L-histidinol phosphate + H2O = L-histidinol + phosphate. Its pathway is amino-acid biosynthesis; L-histidine biosynthesis; L-histidine from 5-phospho-alpha-D-ribose 1-diphosphate: step 6/9. It functions in the pathway amino-acid biosynthesis; L-histidine biosynthesis; L-histidine from 5-phospho-alpha-D-ribose 1-diphosphate: step 8/9. The polypeptide is Histidine biosynthesis bifunctional protein HisB (Campylobacter jejuni subsp. jejuni serotype O:6 (strain 81116 / NCTC 11828)).